Here is a 61-residue protein sequence, read N- to C-terminus: Metallothionein-1F (61 aa).

M1 bears the N-acetylmethionine mark. Positions 1-29 (MDPNCSCPTGGSCTCAGSCTCKACRCTSC) are beta. Positions 5, 7, 13, 15, 19, 21, 24, 26, 29, 33, 34, 36, 37, 41, 44, 48, 50, and 57 each coordinate a divalent metal cation. Residues 30–61 (KKSCCSCCPAGCAKCAQGCICKGASDKCSCCA) form an alpha region. S58 is subject to Phosphoserine. Positions 59 and 60 each coordinate a divalent metal cation.

Belongs to the metallothionein superfamily. Type 1 family. Monomer.

Its function is as follows. Metallothioneins have a high content of cysteine residues that bind various heavy metals; these proteins are transcriptionally regulated by both heavy metals and glucocorticoids. The sequence is that of Metallothionein-1F (MT1F) from Sus scrofa (Pig).